Reading from the N-terminus, the 1021-residue chain is Ubiquitin-activating enzyme E1 1 (1021 aa).

ATP contacts are provided by R22, A442, and D468. Residue D470 participates in Mg(2+) binding. Residues R479, K492, V518, and 542 to 543 (DN) each bind ATP. D542 provides a ligand contact to Mg(2+). The active-site Glycyl thioester intermediate is the C598.

This sequence belongs to the ubiquitin-activating E1 family. In terms of assembly, monomer.

It is found in the cytoplasm. It localises to the nucleus. The catalysed reaction is ATP + ubiquitin + [E1 ubiquitin-activating enzyme]-L-cysteine = AMP + diphosphate + S-ubiquitinyl-[E1 ubiquitin-activating enzyme]-L-cysteine.. It participates in protein modification; protein ubiquitination. Functionally, E1 ubiquitin-activating enzyme that catalyzes the first step in ubiquitin conjugation to mark cellular proteins for degradation through the ubiquitin-proteasome system. Activates ubiquitin by first adenylating its C-terminal glycine residue with ATP, and thereafter linking this residue to the side chain of a cysteine residue in E1, yielding a ubiquitin-E1 thioester and free AMP. In Candida albicans (strain WO-1) (Yeast), this protein is Ubiquitin-activating enzyme E1 1 (UBA1).